We begin with the raw amino-acid sequence, 184 residues long: Endoribonuclease YbeY (184 aa).

Zn(2+)-binding residues include H146, H150, and H156.

Belongs to the endoribonuclease YbeY family. Zn(2+) is required as a cofactor.

It is found in the cytoplasm. In terms of biological role, single strand-specific metallo-endoribonuclease involved in late-stage 70S ribosome quality control and in maturation of the 3' terminus of the 16S rRNA. This is Endoribonuclease YbeY from Nostoc sp. (strain PCC 7120 / SAG 25.82 / UTEX 2576).